The primary structure comprises 320 residues: tRNA(Ile)-lysidine synthase (320 aa).

33 to 38 is an ATP binding site; that stretch reads SGGPDS.

The protein belongs to the tRNA(Ile)-lysidine synthase family.

It localises to the cytoplasm. It catalyses the reaction cytidine(34) in tRNA(Ile2) + L-lysine + ATP = lysidine(34) in tRNA(Ile2) + AMP + diphosphate + H(+). Functionally, ligates lysine onto the cytidine present at position 34 of the AUA codon-specific tRNA(Ile) that contains the anticodon CAU, in an ATP-dependent manner. Cytidine is converted to lysidine, thus changing the amino acid specificity of the tRNA from methionine to isoleucine. This is tRNA(Ile)-lysidine synthase from Mycolicibacterium paratuberculosis (strain ATCC BAA-968 / K-10) (Mycobacterium paratuberculosis).